We begin with the raw amino-acid sequence, 204 residues long: Inner membrane protein BB_0250 (204 aa).

The next 5 membrane-spanning stretches (helical) occupy residues 17–37 (IAYS…NVPI), 58–78 (ILIF…SFYI), 101–121 (YYYG…PFGV), 139–159 (FIVS…TLSF), and 172–192 (IKII…IIYV).

The protein belongs to the DedA family.

It localises to the cell inner membrane. Functionally, required for proper cell division and envelope integrity. The protein is Inner membrane protein BB_0250 of Borreliella burgdorferi (strain ATCC 35210 / DSM 4680 / CIP 102532 / B31) (Borrelia burgdorferi).